The primary structure comprises 929 residues: Band 3 anion transport protein (929 aa).

At methionine 1 the chain carries N-acetylmethionine. The Cytoplasmic segment spans residues 1-422 (MGDMRDHEEV…LSDITDALSP (422 aa)). Serine 18 is modified (phosphoserine). Phosphotyrosine occurs at positions 31 and 56. Positions 46–67 (ALPTEQTATDYVPSSTSTPHPS) are disordered. Positions 58 to 67 (PSSTSTPHPS) are enriched in low complexity. Residues 69–303 (GQVYVELQEL…LGRAAATLMT (235 aa)) form a globular region. The interval 190-199 (AVLTRSGGAS) is interaction with ANK1. Phosphoserine is present on residues serine 199, serine 222, and serine 363. Residues 317–370 (REELLRSLESFLDCSLVLPPTDAPSEKALLNLVPVQKELLRRRYLPSPAKPDPN) form a dimerization arm region. The disordered stretch occupies residues 366 to 389 (KPDPNLYNTLDLNGGKGGPGDEDD). Phosphotyrosine is present on tyrosine 372. Threonine 374 carries the phosphothreonine modification. Residues 423–446 (QVLAAVIFIYFAALSPAVTFGGLL) form a helical membrane-spanning segment. The Extracellular segment spans residues 447-454 (GEKTRNLM). A helical transmembrane segment spans residues 455 to 475 (GVSELLISTAVQGILFALLGA). Residues 476 to 478 (QPL) lie on the Cytoplasmic side of the membrane. A discontinuously helical membrane pass occupies residues 479-495 (LVLGFSGPLLVFEEAFF). Residues 496–504 (SFCESNNLE) are Extracellular-facing. A helical transmembrane segment spans residues 505–525 (YIVGRAWIGFWLILLVMLVVA). Residues 526–537 (FEGSFLVQYISR) lie on the Cytoplasmic side of the membrane. Residues 538–560 (YTQEIFSFLISLIFIYETFSKLI) traverse the membrane as a helical segment. The Extracellular portion of the chain corresponds to 561-588 (KIFQDYPLQQTYAPVVMKPKPQGPVPNT). A helical transmembrane segment spans residues 589-609 (ALFSLVLMAGTFLLAMTLRKF). At 610–620 (KNSTYFPGKLR) the chain is on the cytoplasmic side. Residues 621–641 (RVIGDFGVPISILIMVLVDSF) form a helical membrane-spanning segment. The Extracellular segment spans residues 642–681 (IKGTYTQKLSVPDGLKVSNSSARGWVIHPLGLYRLFPTWM). Asparagine 660 carries N-linked (GlcNAc...) asparagine glycosylation. A helical transmembrane segment spans residues 682–702 (MFASVLPALLVFILIFLESQI). The Cytoplasmic segment spans residues 703–718 (TTLIVSKPERKMIKGS). A helical transmembrane segment spans residues 719 to 737 (GFHLDLLLVVGMGGVAALF). Residues 738–755 (GMPWLSATTVRSVTHANA) form a discontinuously helical membrane-spanning segment. Topologically, residues 756–778 (LTVMGKASGPGAAAQIQEVKEQR) are cytoplasmic. 2 helical membrane passes run 779-799 (ISGL…PILS) and 800-818 (RIPL…VTSL). Residues 819 to 856 (SGIQLFDRILLLFKPPKYHPDVPFVKRVKTWRMHLFTG) are Cytoplasmic-facing. Residues 857–887 (IQIICLAVLWVVKSTPASLALPFVLILTVPL) constitute an intramembrane region (discontinuously helical). Cysteine 861 carries the S-palmitoyl cysteine lipid modification. Over 888 to 929 (RRLILPLIFRELELQCLDGDDAKVTFDEENGLDEYDEVPMPV) the chain is Cytoplasmic. Residue tyrosine 922 is modified to Phosphotyrosine.

This sequence belongs to the anion exchanger (TC 2.A.31) family. As to quaternary structure, a dimer in solution, but in its membrane environment, it exists primarily as a mixture of dimers and tetramers and spans the membrane asymmetrically. Component of the ankyrin-1 complex in the erythrocyte, composed of ANK1, RHCE, RHAG, SLC4A1, EPB42, GYPA, GYPB and AQP1. Interacts with STOM; this interaction positively regulates SLC4A1 activity. Interacts with GYPA; a GYPA monomer is bound at each end of the SLC4A1 dimer forming a heterotetramer. Three SLC4A1 dimers (Band 3-I, Band 3-II and Band 3-III) participates in the ankyrin-1 complex. Interacts (via the cytoplasmic domain) with EPB42; this interaction is mediated by the SLC4A1 Band 3-I dimer. Interacts (via the cytoplasmic domain) directly with ANK1; this interaction is mediated by the SLC4A1 Band 3-II and Band 3-III dimers. In terms of assembly, interacts with TMEM139. As to expression, detected in erythrocytes (at protein level).

Its subcellular location is the cell membrane. The protein resides in the basolateral cell membrane. The catalysed reaction is hydrogencarbonate(in) + chloride(out) = hydrogencarbonate(out) + chloride(in). Functions both as a transporter that mediates electroneutral anion exchange across the cell membrane and as a structural protein. Component of the ankyrin-1 complex of the erythrocyte membrane; required for normal flexibility and stability of the erythrocyte membrane and for normal erythrocyte shape via the interactions of its cytoplasmic domain with cytoskeletal proteins, glycolytic enzymes, and hemoglobin. Functions as a transporter that mediates the 1:1 exchange of inorganic anions across the erythrocyte membrane. Mediates chloride-bicarbonate exchange in the kidney, and is required for normal acidification of the urine. The protein is Band 3 anion transport protein of Mus musculus (Mouse).